Reading from the N-terminus, the 786-residue chain is Endonuclease MutS2 (786 aa).

332-339 is a binding site for ATP; that stretch reads GPNTGGKT. Positions 711-786 constitute a Smr domain; it reads VDLRGMDSIE…GTGVTIVELK (76 aa).

Belongs to the DNA mismatch repair MutS family. MutS2 subfamily. Homodimer. Binds to stalled ribosomes, contacting rRNA.

Its function is as follows. Endonuclease that is involved in the suppression of homologous recombination and thus may have a key role in the control of bacterial genetic diversity. Acts as a ribosome collision sensor, splitting the ribosome into its 2 subunits. Detects stalled/collided 70S ribosomes which it binds and splits by an ATP-hydrolysis driven conformational change. Acts upstream of the ribosome quality control system (RQC), a ribosome-associated complex that mediates the extraction of incompletely synthesized nascent chains from stalled ribosomes and their subsequent degradation. Probably generates substrates for RQC. The protein is Endonuclease MutS2 of Clostridium kluyveri (strain NBRC 12016).